The sequence spans 246 residues: tRNA pseudouridine synthase A (246 aa).

Catalysis depends on D53, which acts as the Nucleophile. Position 112 (Y112) interacts with substrate.

The protein belongs to the tRNA pseudouridine synthase TruA family. Homodimer.

The enzyme catalyses uridine(38/39/40) in tRNA = pseudouridine(38/39/40) in tRNA. Functionally, formation of pseudouridine at positions 38, 39 and 40 in the anticodon stem and loop of transfer RNAs. In Anaplasma phagocytophilum (strain HZ), this protein is tRNA pseudouridine synthase A.